The primary structure comprises 917 residues: MLX-interacting protein (917 aa).

A disordered region spans residues 1 to 72 (MAADVFMCSP…AGPGREEPPR (72 aa)). A2 is modified (N-acetylalanine). A phosphoserine mark is found at S9, S33, and S39. A compositionally biased stretch (acidic residues) spans 27–37 (PEDDDDSDTDE). Low complexity predominate over residues 47–57 (ATSARAHASAA). Residues 73 to 327 (RQQIIHSGHF…PLQPNLDFMD (255 aa)) form a required for cytoplasmic localization region. Residues 322–445 (NLDFMDTFEP…LLSPGPAPAP (124 aa)) form a transactivation domain region. Disordered stretches follow at residues 347–402 (LPPP…CERT) and 632–711 (SHST…TDPK). The segment covering 378 to 388 (LPNSLITSSAA) has biased composition (polar residues). Positions 632-643 (SHSTSSQPSPVS) are enriched in low complexity. S667 carries the post-translational modification Phosphoserine. A compositionally biased stretch (polar residues) spans 670 to 685 (VPATGSSRDCPNSGQA). Low complexity predominate over residues 686 to 704 (SPCPSEQSPSPQSPQNNCS). The 51-residue stretch at 717-767 (KNRQKHISAEQKRRFNIRMGFNTLNSLISNNSKQTSHAITLQKTMEYITKL) folds into the bHLH domain. The tract at residues 767–788 (LQQERMQMQEEARRLREEIEEL) is leucine-zipper. Residues 830-879 (WKFWIFSMIIKPLFESFKGMVSTSSLEEFHRTALSWLDQHCSLPVLRPMV) are mediates heterotypic interactions between MLXIP and MLX and is required for cytoplasmic localization. The tract at residues 897 to 917 (SQLPEQASEAVTRMGKRSGES) is disordered.

In terms of assembly, efficient DNA binding requires dimerization with another bHLH protein. Binds DNA as a homodimer or a heterodimer with MLX/TCFL4.

The protein resides in the cytoplasm. It localises to the nucleus. It is found in the mitochondrion outer membrane. In terms of biological role, binds DNA as a heterodimer with MLX/TCFL4 and activates transcription. Binds to the canonical E box sequence 5'-CACGTG-3'. Plays a role in transcriptional activation of glycolytic target genes. Involved in glucose-responsive gene regulation. Regulates transcription in response to changes in cellular carbohydrate abundance such as occurs during fasting to feeding metabolic transition. Refeeding stimulates MLXIPL/ChREBP transcription factor, leading to increased BCKDK to PPM1K expression ratio, phosphorylation and activation of ACLY that ultimately results in the generation of malonyl-CoA and oxaloacetate immediate substrates of de novo lipogenesis and gluconeogenesis, respectively. In Mus musculus (Mouse), this protein is MLX-interacting protein.